Consider the following 261-residue polypeptide: Small ribosomal subunit protein eS4 (261 aa).

An S4 RNA-binding domain is found at 42 to 104 (LPLVIFLRNR…TGEFFRLIYD (63 aa)).

This sequence belongs to the eukaryotic ribosomal protein eS4 family.

In Carabus granulatus (Ground beetle), this protein is Small ribosomal subunit protein eS4 (RpS4).